The chain runs to 241 residues: Triosephosphate isomerase (241 aa).

Substrate is bound at residue 9–11; it reads NWK. Residue histidine 96 is the Electrophile of the active site. Catalysis depends on glutamate 165, which acts as the Proton acceptor. Residues glycine 171, serine 204, and 225 to 226 each bind substrate; that span reads GG.

Belongs to the triosephosphate isomerase family. Homodimer.

It is found in the cytoplasm. It catalyses the reaction D-glyceraldehyde 3-phosphate = dihydroxyacetone phosphate. It participates in carbohydrate biosynthesis; gluconeogenesis. Its pathway is carbohydrate degradation; glycolysis; D-glyceraldehyde 3-phosphate from glycerone phosphate: step 1/1. In terms of biological role, involved in the gluconeogenesis. Catalyzes stereospecifically the conversion of dihydroxyacetone phosphate (DHAP) to D-glyceraldehyde-3-phosphate (G3P). The sequence is that of Triosephosphate isomerase from Prochlorococcus marinus (strain MIT 9312).